The chain runs to 238 residues: Small ribosomal subunit protein eS4 (238 aa).

The S4 RNA-binding domain maps to 38–110 (LPLAIIIRDV…EKKYYALIPI (73 aa)).

Belongs to the eukaryotic ribosomal protein eS4 family.

This chain is Small ribosomal subunit protein eS4, found in Pyrobaculum islandicum (strain DSM 4184 / JCM 9189 / GEO3).